The chain runs to 1258 residues: uncharacterized protein (1258 aa).

Residues 55-93 (ELASEILGVCWQENGVLAAGISEGTWKRFLAGKQAINAE) form a WD 1 repeat. A compositionally biased stretch (basic and acidic residues) spans 112-128 (GGRTKERKDTGTSRQEK). A disordered region spans residues 112–138 (GGRTKERKDTGTSRQEKFLSSSHPHTD). 14 WD repeats span residues 640–679 (ETLGNILSAAFSPEGQLLATCDTDCHVRVWEVKSGKLLLI), 682–721 (GHSNWVRFVVFSPDGEILASCGADENVKLWSVRDGVCIKT), 724–763 (GHEHEVFSVAFHPDGETLASASGDKTIKLWDIQDGTCLQT), 766–807 (GHTD…RTLK), 809–849 (HTGW…KTYI), 850–889 (GHTNSVYSIAYSPDSKILVSGSGDRTIKLWDCQTHICIKT), 892–931 (GHTNEVCSVAFSPDGQTLACVSLDQSVRLWNCRTGQCLKA), 934–975 (GNTD…SSLE), 976–1017 (GHTD…QILL), 1019–1059 (HTDW…KTLS), 1060–1101 (EHSD…GILR), 1103–1143 (HSNR…KTLT), 1144–1183 (GHTNWVFDIAFSPDGKILASASHDQTVRIWDVNTGKCHHI), and 1186–1227 (GHTH…QILR).

This is an uncharacterized protein from Nostoc sp. (strain PCC 7120 / SAG 25.82 / UTEX 2576).